Reading from the N-terminus, the 298-residue chain is Lipoyl synthase (298 aa).

The [4Fe-4S] cluster site is built by C40, C45, C51, C67, C71, C74, and S280. Residues 53-269 (AVRKTATFMI…KEIALSKGFS (217 aa)) enclose the Radical SAM core domain.

Belongs to the radical SAM superfamily. Lipoyl synthase family. It depends on [4Fe-4S] cluster as a cofactor.

The protein localises to the cytoplasm. The enzyme catalyses [[Fe-S] cluster scaffold protein carrying a second [4Fe-4S](2+) cluster] + N(6)-octanoyl-L-lysyl-[protein] + 2 oxidized [2Fe-2S]-[ferredoxin] + 2 S-adenosyl-L-methionine + 4 H(+) = [[Fe-S] cluster scaffold protein] + N(6)-[(R)-dihydrolipoyl]-L-lysyl-[protein] + 4 Fe(3+) + 2 hydrogen sulfide + 2 5'-deoxyadenosine + 2 L-methionine + 2 reduced [2Fe-2S]-[ferredoxin]. The protein operates within protein modification; protein lipoylation via endogenous pathway; protein N(6)-(lipoyl)lysine from octanoyl-[acyl-carrier-protein]. In terms of biological role, catalyzes the radical-mediated insertion of two sulfur atoms into the C-6 and C-8 positions of the octanoyl moiety bound to the lipoyl domains of lipoate-dependent enzymes, thereby converting the octanoylated domains into lipoylated derivatives. This chain is Lipoyl synthase, found in Bacillus mycoides (strain KBAB4) (Bacillus weihenstephanensis).